The primary structure comprises 208 residues: Ribonuclease HII (208 aa).

The RNase H type-2 domain maps to 11 to 203; it reads GPVAGVDEAG…VAAAHEQWLK (193 aa). Positions 17, 18, and 112 each coordinate a divalent metal cation.

It belongs to the RNase HII family. The cofactor is Mn(2+). It depends on Mg(2+) as a cofactor.

The protein localises to the cytoplasm. It catalyses the reaction Endonucleolytic cleavage to 5'-phosphomonoester.. Endonuclease that specifically degrades the RNA of RNA-DNA hybrids. The protein is Ribonuclease HII of Corynebacterium jeikeium (strain K411).